Here is a 105-residue protein sequence, read N- to C-terminus: Dynein axonemal light chain 4 (105 aa).

Belongs to the dynein light chain family. Consists of at least two heavy chains and a number of intermediate and light chains.

It localises to the cytoplasm. The protein localises to the cytoskeleton. Its subcellular location is the cilium axoneme. Its function is as follows. Force generating protein of respiratory cilia. Produces force towards the minus ends of microtubules. Dynein has ATPase activity. This Mus musculus (Mouse) protein is Dynein axonemal light chain 4 (Dnal4).